Here is a 417-residue protein sequence, read N- to C-terminus: MFSRDLTLARYDAELFAAMKQEAQRQEDHIELIASENYTSPAVMEAQGSVLTNKYAEGYPGKRYYGGCEYVDIVEQLAIDRAKQLFGADYANVQPHAGSQANAAVYQALVKPGDTVLGMSLAHGGHLTHGASVNFSGKMYNAVQYGIDANGFIDYDEVERLALEHKPKMIVAGYSAYSQVLDFARFREIADKVGAYLFVDMAHFAGLVAAGVYPNPVPFADVVTTTTHKTLRGPRGGLILAKANEEIEKKLNSAVFPGGQGGPLEHVIAAKAVCFKEALQPDFKEYQQQVVKNAKAMAQVFIERGFDVVSGGTENHLFLVSLIKQEITGKDADAALGRAFITVNKNSVPNDPRSPFVTSGLRIGTPAVTTRGFKETECRELAGWICDILVDLNNEAVVDGVREKVQAICARFPVYGK.

Residues L121 and 125 to 127 (GHL) each bind (6S)-5,6,7,8-tetrahydrofolate. Residue K229 is modified to N6-(pyridoxal phosphate)lysine. A (6S)-5,6,7,8-tetrahydrofolate-binding site is contributed by 354–356 (SPF).

Belongs to the SHMT family. As to quaternary structure, homodimer. Requires pyridoxal 5'-phosphate as cofactor.

Its subcellular location is the cytoplasm. The enzyme catalyses (6R)-5,10-methylene-5,6,7,8-tetrahydrofolate + glycine + H2O = (6S)-5,6,7,8-tetrahydrofolate + L-serine. The protein operates within one-carbon metabolism; tetrahydrofolate interconversion. It participates in amino-acid biosynthesis; glycine biosynthesis; glycine from L-serine: step 1/1. Catalyzes the reversible interconversion of serine and glycine with tetrahydrofolate (THF) serving as the one-carbon carrier. This reaction serves as the major source of one-carbon groups required for the biosynthesis of purines, thymidylate, methionine, and other important biomolecules. Also exhibits THF-independent aldolase activity toward beta-hydroxyamino acids, producing glycine and aldehydes, via a retro-aldol mechanism. The sequence is that of Serine hydroxymethyltransferase from Azotobacter vinelandii (strain DJ / ATCC BAA-1303).